The following is a 622-amino-acid chain: Threonine--tRNA ligase (622 aa).

The editing domain stretch occupies residues 1–141; that stretch reads MKTLLIHSDY…SRKITTERKE (141 aa). The segment at 199–498 is catalytic; that stretch reads PHVKYIKEKE…TLENKPPALP (300 aa). Zn(2+)-binding residues include C291, H343, and H467.

Belongs to the class-II aminoacyl-tRNA synthetase family. In terms of assembly, homodimer. Requires Zn(2+) as cofactor.

Its subcellular location is the cytoplasm. It catalyses the reaction tRNA(Thr) + L-threonine + ATP = L-threonyl-tRNA(Thr) + AMP + diphosphate + H(+). Catalyzes the attachment of threonine to tRNA(Thr) in a two-step reaction: L-threonine is first activated by ATP to form Thr-AMP and then transferred to the acceptor end of tRNA(Thr). Also edits incorrectly charged L-seryl-tRNA(Thr). The protein is Threonine--tRNA ligase of Methanococcus maripaludis (strain C5 / ATCC BAA-1333).